A 481-amino-acid chain; its full sequence is Bindin (481 aa).

A signal peptide spans 1–20 (MGFHQILVTVVALALASVRA). Residues 21–245 (EFPSRTDSPT…DSKRGARKKR (225 aa)) constitute a propeptide that is removed on maturation. 2 stretches are compositionally biased toward basic and acidic residues: residues 154-163 (DGDLRKRRES) and 178-189 (RKGDEPAGHTLK). 2 disordered regions span residues 154–193 (DGDL…DLAP) and 219–243 (GHSP…GARK). Residues 352–360 (LRHLRHHSN) are fucose-binding domain. The tract at residues 376 to 481 (SAMQEEEEEE…QPYGQGYLQG (106 aa)) is disordered. Over residues 379–389 (QEEEEEEEEDA) the composition is skewed to acidic residues. Residues 406 to 416 (AGFGGGGGGGA) show a composition bias toward gly residues. Composition is skewed to low complexity over residues 417-440 (MMSP…MGFP) and 464-481 (GMGM…YLQG).

Belongs to the bindin family.

Its subcellular location is the cytoplasmic vesicle. It localises to the secretory vesicle. The protein localises to the acrosome lumen. Species-specific sea urchin sperm protein required for adhesion of sperm to the egg surface during fertilization. Bindin coats the acrosomal process after it is externalized by the acrosome reaction. It binds to sulfated, fucose-containing polysaccharides on the vitelline layer receptor proteoglycans which cover the egg plasma membrane. This chain is Bindin, found in Strongylocentrotus purpuratus (Purple sea urchin).